Reading from the N-terminus, the 649-residue chain is Echinoderm microtubule-associated protein-like 2 (649 aa).

A tandem atypical propeller in EMLs region spans residues 10-649 (KEVIFSMEEG…DTSVLQWRVA (640 aa)). WD repeat units follow at residues 56–93 (KLDWVYGYRGRDCRANLYLLPTGEVVYFVASVAVLYSV), 97–144 (RQRH…VWDS), 151–192 (HVLG…VWDW), 195–234 (ESKVVDSKCSNEAVLVATFHPTDPNLLITCGKSHIYFWSL), 241–280 (KRQGLFEKHEKPKYVLCVTFLEGGDVVTGDSGGNLYVWGK), 285–323 (ITQEVLGAHDGGVFALCALRDGTLVSGGGRDRRVVLWGS), 369–406 (FSLLVQGHVEELWGLATHPSRAQFVSCGQDKLVHLWSS), 410–447 (QPVWSRSIEDPARSAGFHPSGSVLAVGTVTGRWLLLDT), 452–489 (LVAIHTDGNEQISVVSFSPDGAYLAVGSHDNLVYVYTV), 495–535 (KVSR…YWDA), 564–602 (FGIWPEGADGTDINAVARSHDGNLLVSADDFGKVHLFSY), and 609–648 (ALSHKYGGHSSHVTNVAFLWDDSMVLTTGGKDTSVLQWRV).

This sequence belongs to the WD repeat EMAP family. As to quaternary structure, interacts with GRID2 and may also interact with GRID1. Interacts with EML3. Binds unpolymerized tubulins via its WD repeat region. Widely expressed in both brain and peripheral tissues, including brainstem and enrichment in the postsynaptic density, PSD.

It is found in the cytoplasm. The protein resides in the cytoskeleton. Its subcellular location is the spindle. Tubulin binding protein that inhibits microtubule nucleation and growth, resulting in shorter microtubules. This chain is Echinoderm microtubule-associated protein-like 2 (Eml2), found in Rattus norvegicus (Rat).